Reading from the N-terminus, the 517-residue chain is Protein translocase subunit SecD (517 aa).

6 consecutive transmembrane segments (helical) span residues 5 to 25, 357 to 377, 380 to 400, 407 to 427, 455 to 475, and 479 to 499; these read LRWI…FPLD, IWAG…YYKF, FIAS…MGMF, PGIA…VLIF, IIDS…FGTG, and GFAV…VTLS.

It belongs to the SecD/SecF family. SecD subfamily. Forms a complex with SecF. Part of the essential Sec protein translocation apparatus which comprises SecA, SecYEG and auxiliary proteins SecDF. Other proteins may also be involved.

Its subcellular location is the cell inner membrane. Part of the Sec protein translocase complex. Interacts with the SecYEG preprotein conducting channel. SecDF uses the proton motive force (PMF) to complete protein translocation after the ATP-dependent function of SecA. The chain is Protein translocase subunit SecD from Calditerrivibrio nitroreducens (strain DSM 19672 / NBRC 101217 / Yu37-1).